The following is a 35-amino-acid chain: Photosystem II reaction center protein Y (35 aa).

Residues 1 to 4 (MDTR) are Lumenal-facing. A helical transmembrane segment spans residues 5–23 (LLVVLLPVATAAAWALFNI). Over 24 to 35 (GRLALQQLKRMS) the chain is Stromal.

Belongs to the PsbY family. PSII is composed of 1 copy each of membrane proteins PsbA, PsbB, PsbC, PsbD, PsbE, PsbF, PsbH, PsbI, PsbJ, PsbK, PsbL, PsbM, PsbT, PsbX, PsbY, PsbZ, Psb30/Ycf12, at least 3 peripheral proteins of the oxygen-evolving complex and a large number of cofactors. It forms dimeric complexes.

The protein resides in the plastid. Its subcellular location is the chloroplast thylakoid membrane. Its function is as follows. Loosely associated component of the core of photosystem II (PSII), it is not always seen in crystals. PSII is a light-driven water plastoquinone oxidoreductase, using light energy to abstract electrons from H(2)O, generating a proton gradient subsequently used for ATP formation. This Emiliania huxleyi (Coccolithophore) protein is Photosystem II reaction center protein Y.